The following is a 570-amino-acid chain: Proline--tRNA ligase (570 aa).

It belongs to the class-II aminoacyl-tRNA synthetase family. ProS type 1 subfamily. Homodimer.

It is found in the cytoplasm. It carries out the reaction tRNA(Pro) + L-proline + ATP = L-prolyl-tRNA(Pro) + AMP + diphosphate. Functionally, catalyzes the attachment of proline to tRNA(Pro) in a two-step reaction: proline is first activated by ATP to form Pro-AMP and then transferred to the acceptor end of tRNA(Pro). As ProRS can inadvertently accommodate and process non-cognate amino acids such as alanine and cysteine, to avoid such errors it has two additional distinct editing activities against alanine. One activity is designated as 'pretransfer' editing and involves the tRNA(Pro)-independent hydrolysis of activated Ala-AMP. The other activity is designated 'posttransfer' editing and involves deacylation of mischarged Ala-tRNA(Pro). The misacylated Cys-tRNA(Pro) is not edited by ProRS. The protein is Proline--tRNA ligase of Acidithiobacillus ferrooxidans (strain ATCC 23270 / DSM 14882 / CIP 104768 / NCIMB 8455) (Ferrobacillus ferrooxidans (strain ATCC 23270)).